Here is an 863-residue protein sequence, read N- to C-terminus: Eukaryotic translation initiation factor 3 subunit C (863 aa).

The tract at residues 1 to 92 (MSRFFRGGDD…VKSAKDKRFD (92 aa)) is disordered. A compositionally biased stretch (acidic residues) spans 16–53 (SSDEEELYSTSEEEEEEDQDQEESSEEEDEEESSDEDE). The segment covering 79 to 92 (GATKVKSAKDKRFD) has biased composition (basic and acidic residues). In terms of domain architecture, PCI spans 604–778 (FHMHINLELL…KTVIFRKGVE (175 aa)). The disordered stretch occupies residues 808–863 (TQGSANAFSRKDGRQGGQRGGGQRSGRGGARAGGNAQRQAGGTQFTGGALGAAVRG). Over residues 822–839 (QGGQRGGGQRSGRGGARA) the composition is skewed to gly residues. Residues 840–850 (GGNAQRQAGGT) are compositionally biased toward low complexity.

Belongs to the eIF-3 subunit C family. In terms of assembly, component of the eukaryotic translation initiation factor 3 (eIF-3) complex.

It is found in the cytoplasm. Functionally, component of the eukaryotic translation initiation factor 3 (eIF-3) complex, which is involved in protein synthesis of a specialized repertoire of mRNAs and, together with other initiation factors, stimulates binding of mRNA and methionyl-tRNAi to the 40S ribosome. The eIF-3 complex specifically targets and initiates translation of a subset of mRNAs involved in cell proliferation. In Chaetomium globosum (strain ATCC 6205 / CBS 148.51 / DSM 1962 / NBRC 6347 / NRRL 1970) (Soil fungus), this protein is Eukaryotic translation initiation factor 3 subunit C.